Here is a 426-residue protein sequence, read N- to C-terminus: Glucose-1-phosphate adenylyltransferase (426 aa).

Residues Tyr-100, Gly-165, 180–181 (EK), and Ser-191 each bind alpha-D-glucose 1-phosphate.

It belongs to the bacterial/plant glucose-1-phosphate adenylyltransferase family. As to quaternary structure, homotetramer.

The catalysed reaction is alpha-D-glucose 1-phosphate + ATP + H(+) = ADP-alpha-D-glucose + diphosphate. Its pathway is glycan biosynthesis; glycogen biosynthesis. Involved in the biosynthesis of ADP-glucose, a building block required for the elongation reactions to produce glycogen. Catalyzes the reaction between ATP and alpha-D-glucose 1-phosphate (G1P) to produce pyrophosphate and ADP-Glc. The protein is Glucose-1-phosphate adenylyltransferase of Acetivibrio thermocellus (strain ATCC 27405 / DSM 1237 / JCM 9322 / NBRC 103400 / NCIMB 10682 / NRRL B-4536 / VPI 7372) (Clostridium thermocellum).